A 187-amino-acid chain; its full sequence is Avirulence protein ATR39-2 (187 aa).

An N-terminal signal peptide occupies residues 1 to 20 (MVKCTPLLALTVIVSAGSDA). The RxLR-dEER motif lies at 49 to 66 (RVLRASDVPNEVAAGESR).

This sequence belongs to the RxLR effector family.

The protein localises to the secreted. The protein resides in the host cell. Secreted effector that acts as an elicitor of hypersensitive response (HR) specifically on plants carrying defense protein RPP39. The allele ATR39-1 is recognized by RPP39, whereas the ATR39-2 allele is nor recognized. This Hyaloperonospora arabidopsidis (strain Emoy2) (Downy mildew agent) protein is Avirulence protein ATR39-2.